We begin with the raw amino-acid sequence, 189 residues long: GTPase NRas (189 aa).

Residues 10–18 (GAGGVGKSA) and 29–30 (VD) each bind GTP. Residues 32–40 (YDPTIEDSY) carry the Effector region motif. A GTP-binding site is contributed by 57–61 (DTAGQ). At Ser-89 the chain carries Phosphoserine. 116 to 119 (NKCD) is a binding site for GTP. The segment at 166 to 185 (YRMKKLNSSDDGTQGCMGLP) is hypervariable region. Lys-170 is covalently cross-linked (Glycyl lysine isopeptide (Lys-Gly) (interchain with G-Cter in ubiquitin)). The S-palmitoyl cysteine moiety is linked to residue Cys-181. Cys-186 carries S-farnesyl cysteine lipidation. Positions 187–189 (VVM) are cleaved as a propeptide — removed in mature form.

The protein belongs to the small GTPase superfamily. Ras family. As to quaternary structure, interacts (active GTP-bound form preferentially) with RGS14. Interacts (active GTP-bound form) with RASSF7. Interacts (active GTP-bound form) with both SHOC2 and PP1c (all isoforms) to form a tertiary complex; SHOC2 and PP1c preferably bind M-Ras/MRAS, but they also bind K-Ras/KRAS, N-Ras/NRAS and H-Ras/HRAS. Palmitoylated by the ZDHHC9-GOLGA7 complex. Depalmitoylated by ABHD17A, ABHD17B and ABHD17C. A continuous cycle of de- and re-palmitoylation regulates rapid exchange between plasma membrane and Golgi. Post-translationally, acetylation at Lys-104 prevents interaction with guanine nucleotide exchange factors (GEFs). In terms of processing, ubiquitinated by the BCR(LZTR1) E3 ubiquitin ligase complex at Lys-170 in a non-degradative manner, leading to inhibit Ras signaling by decreasing Ras association with membranes. Phosphorylation at Ser-89 enhances NRAS association with its downstream effectors.

It localises to the cell membrane. It is found in the golgi apparatus membrane. It carries out the reaction GTP + H2O = GDP + phosphate + H(+). With respect to regulation, alternates between an inactive form bound to GDP and an active form bound to GTP. Activated by a guanine nucleotide-exchange factor (GEF) and inactivated by a GTPase-activating protein (GAP). In terms of biological role, ras proteins bind GDP/GTP and possess intrinsic GTPase activity. In Pongo abelii (Sumatran orangutan), this protein is GTPase NRas (NRAS).